Consider the following 51-residue polypeptide: Protein SspM (51 aa).

This sequence belongs to the alpha/beta-type SASP family.

The sequence is that of Protein SspM (sspM) from Mycolicibacterium phlei (Mycobacterium phlei).